The sequence spans 410 residues: uncharacterized protein (410 aa).

Residues 178–187 show a composition bias toward polar residues; that stretch reads QKNHRNQLST. 2 disordered regions span residues 178 to 203 and 236 to 272; these read QKNHRNQLSTQKKQQQALQKAQQEHQ and RAEQAAREQEKREREALAQRQKAEEKRTSKPYQPTVQ. The span at 188–198 shows a compositional bias: low complexity; the sequence is QKKQQQALQKA. Residues 236–263 are compositionally biased toward basic and acidic residues; it reads RAEQAAREQEKREREALAQRQKAEEKRT.

This is an uncharacterized protein from Haemophilus influenzae (strain ATCC 51907 / DSM 11121 / KW20 / Rd).